The primary structure comprises 860 residues: Transforming growth factor-beta receptor-associated protein 1 (860 aa).

Residues 24–297 (RVNIECVECC…HILQDFEGRV (274 aa)) form the CNH domain. The stretch at 564–728 (RPLDEQQKNS…LLAIYLHAGP (165 aa)) is one CHCR repeat.

Belongs to the TRAP1 family. Interacts with TGFBR2 and ACVR2B; in the absence of ligand stimulation. Interacts with TGFBR1, ACVRL1, BMPR1A and ACVR1B; in the absence of ligand stimulation and to a less extent. Interacts with SMAD4; the interaction seems to be mutually exclusive with the interaction of SMAD4 and phosphorylated SMAD2. May interact with ALOX5. Interacts with RAB5C. Interacts with VPS8, VPS11 and VPS16. Component of the putative class C core vacuole/endosome tethering (CORVET) complex; the core of which composed of the class C Vps proteins VPS11, VPS16, VPS18 and VPS33A, is associated with VPS8 and TGFBRAP1.

The protein resides in the cytoplasm. Its subcellular location is the early endosome. In terms of biological role, plays a role in the TGF-beta/activin signaling pathway. It associates with inactive heteromeric TGF-beta and activin receptor complexes, mainly through the type II receptor, and is released upon activation of signaling. May recruit SMAD4 to the vicinity of the receptor complex and facilitate its interaction with receptor-regulated Smads, such as SMAD2. Its function is as follows. Plays a role in vesicle-mediated protein trafficking of the endocytic membrane transport pathway. Believed to act as a component of the putative CORVET endosomal tethering complexes which is proposed to be involved in the Rab5-to-Rab7 endosome conversion probably implicating MON1A/B, and via binding SNAREs and SNARE complexes to mediate tethering and docking events during SNARE-mediated membrane fusion. The CORVET complex is proposed to function as a Rab5 effector to mediate early endosome fusion probably in specific endosome subpopulations. Functions predominantly in APPL1-containing endosomes and in degradative but not recycling trafficking of endocytosed cargo. This chain is Transforming growth factor-beta receptor-associated protein 1 (TGFBRAP1), found in Homo sapiens (Human).